The primary structure comprises 444 residues: Phosphoglucosamine mutase (444 aa).

Catalysis depends on Ser-102, which acts as the Phosphoserine intermediate. The Mg(2+) site is built by Ser-102, Asp-241, Asp-243, and Asp-245. Ser-102 is modified (phosphoserine).

This sequence belongs to the phosphohexose mutase family. Mg(2+) serves as cofactor. Activated by phosphorylation.

It carries out the reaction alpha-D-glucosamine 1-phosphate = D-glucosamine 6-phosphate. Functionally, catalyzes the conversion of glucosamine-6-phosphate to glucosamine-1-phosphate. The protein is Phosphoglucosamine mutase of Mannheimia succiniciproducens (strain KCTC 0769BP / MBEL55E).